We begin with the raw amino-acid sequence, 518 residues long: Probable inorganic carbon transporter subunit DabB (518 aa).

13 helical membrane-spanning segments follow: residues methionine 3 to leucine 23, isoleucine 37 to valine 57, tryptophan 65 to valine 85, cysteine 114 to isoleucine 134, alanine 165 to isoleucine 185, methionine 207 to isoleucine 227, alanine 242 to serine 262, methionine 264 to methionine 284, methionine 302 to valine 322, tryptophan 358 to leucine 378, serine 379 to arginine 399, leucine 403 to threonine 423, and tryptophan 442 to leucine 462.

It belongs to the inorganic carbon transporter (TC 9.A.2) DabB family. Forms a complex with DabA.

Its subcellular location is the cell inner membrane. Intracellular DIC accumulation is sensitive to CCCP (carbonyl cyanide-m-chlorophenylhydrazone) and DCCD (N,N-dicyclohexylcarbodiimide) and therefore likely driven by either proton gradient, ATP, or both. In terms of biological role, part of an energy-coupled inorganic carbon pump involved in transport of dissolved inorganic carbon (DIC) with downstream gene dabA (Tcr_0854); has been suggested to be a proton-DIC symporter. The protein is Probable inorganic carbon transporter subunit DabB of Hydrogenovibrio crunogenus (strain DSM 25203 / XCL-2) (Thiomicrospira crunogena).